The sequence spans 425 residues: Orexin/Hypocretin receptor type 1 (425 aa).

The tract at residues Met1–Pro25 is disordered. Residues Met1–Glu46 are Extracellular-facing. Positions Asp26 to Tyr41 are required for response to orexin-A. A helical membrane pass occupies residues Trp47–Val67. Over Cys68–Asn82 the chain is Cytoplasmic. Residues Tyr83–Leu105 traverse the membrane as a helical segment. Residues Val106–Cys119 lie on the Extracellular side of the membrane. A disulfide bridge links Cys119 with Cys202. Residues Lys120–Ile140 form a helical membrane-spanning segment. Residues Ala141–Arg160 lie on the Cytoplasmic side of the membrane. Residues Ala161 to Val182 form a helical membrane-spanning segment. Topologically, residues Met183–Lys213 are extracellular. Asn194 carries an N-linked (GlcNAc...) asparagine glycan. A helical transmembrane segment spans residues Ile214–Tyr235. Over Phe236 to Lys298 the chain is Cytoplasmic. Residues Met299–Lys321 form a helical membrane-spanning segment. The Extracellular segment spans residues Arg322–Val336. Residues Tyr337 to Phe360 form a helical membrane-spanning segment. Residues Leu361–Pro425 are Cytoplasmic-facing.

It belongs to the G-protein coupled receptor 1 family.

It localises to the cell membrane. In terms of biological role, moderately selective excitatory receptor for orexin-A and, with a lower affinity, for orexin-B neuropeptide. Triggers an increase in cytoplasmic Ca(2+) levels in response to orexin-A binding. This is Orexin/Hypocretin receptor type 1 from Bos taurus (Bovine).